The chain runs to 44 residues: Photosystem I reaction center subunit IX 2 (44 aa).

A helical transmembrane segment spans residues 13-35 (APVLATLWLSSTAVILIGVNSYF).

Belongs to the PsaJ family.

It localises to the cellular thylakoid membrane. Functionally, may help in the organization of the PsaE and PsaF subunits. The sequence is that of Photosystem I reaction center subunit IX 2 (psaJ2) from Prochlorococcus marinus (strain NATL2A).